The sequence spans 628 residues: Beta-lactamase-like protein 1 (628 aa).

A signal peptide spans 1 to 28; that stretch reads MKNILSFSFSFSFLYILFLLLFLNNNLL. Asparagine 45, asparagine 68, asparagine 198, and asparagine 241 each carry an N-linked (GlcNAc...) asparagine glycan. Residues 245-281 are compositionally biased toward low complexity; it reads NNNNNNNNNNNNNNNNNNNNNNNNNNNNNNNNNNNNN. A disordered region spans residues 245–285; sequence NNNNNNNNNNNNNNNNNNNNNNNNNNNNNNNNNNNNNKIKT. Residues asparagine 313 and asparagine 335 are each glycosylated (N-linked (GlcNAc...) asparagine). The disordered stretch occupies residues 494–516; the sequence is EKEEKEEEEENQQDESQQQQQQQ. Residues 496 to 506 show a composition bias toward acidic residues; the sequence is EEKEEEEENQQ. Residues 507 to 516 show a composition bias toward low complexity; the sequence is DESQQQQQQQ.

Belongs to the beta-lactamase family.

It is found in the secreted. This is Beta-lactamase-like protein 1 from Dictyostelium discoideum (Social amoeba).